The following is a 249-amino-acid chain: 3-deoxy-manno-octulosonate cytidylyltransferase (249 aa).

It belongs to the KdsB family.

Its subcellular location is the cytoplasm. The enzyme catalyses 3-deoxy-alpha-D-manno-oct-2-ulosonate + CTP = CMP-3-deoxy-beta-D-manno-octulosonate + diphosphate. The protein operates within nucleotide-sugar biosynthesis; CMP-3-deoxy-D-manno-octulosonate biosynthesis; CMP-3-deoxy-D-manno-octulosonate from 3-deoxy-D-manno-octulosonate and CTP: step 1/1. It participates in bacterial outer membrane biogenesis; lipopolysaccharide biosynthesis. Activates KDO (a required 8-carbon sugar) for incorporation into bacterial lipopolysaccharide in Gram-negative bacteria. The protein is 3-deoxy-manno-octulosonate cytidylyltransferase of Photorhabdus laumondii subsp. laumondii (strain DSM 15139 / CIP 105565 / TT01) (Photorhabdus luminescens subsp. laumondii).